A 68-amino-acid chain; its full sequence is Large ribosomal subunit protein uL29 (68 aa).

This sequence belongs to the universal ribosomal protein uL29 family.

This Parvibaculum lavamentivorans (strain DS-1 / DSM 13023 / NCIMB 13966) protein is Large ribosomal subunit protein uL29.